The sequence spans 243 residues: Probable transcriptional regulatory protein BH0025 (243 aa).

Belongs to the TACO1 family.

Its subcellular location is the cytoplasm. The sequence is that of Probable transcriptional regulatory protein BH0025 from Borrelia hermsii (strain HS1 / DAH).